Here is a 205-residue protein sequence, read N- to C-terminus: Holliday junction branch migration complex subunit RuvA (205 aa).

Residues 1–62 (MFEYVTGYVE…EDIMALYGFK (62 aa)) are domain I. The tract at residues 63-141 (TREERLLFTK…DVVPDVFVDL (79 aa)) is domain II. Positions 142 to 152 (FSDEERFDEKK) are flexible linker. Residues 153–205 (GSSTELDEALEALRALGYAEREINRVLPELLKESLTTDQYIKKALSLLLNGKR) form a domain III region.

This sequence belongs to the RuvA family. In terms of assembly, homotetramer. Forms an RuvA(8)-RuvB(12)-Holliday junction (HJ) complex. HJ DNA is sandwiched between 2 RuvA tetramers; dsDNA enters through RuvA and exits via RuvB. An RuvB hexamer assembles on each DNA strand where it exits the tetramer. Each RuvB hexamer is contacted by two RuvA subunits (via domain III) on 2 adjacent RuvB subunits; this complex drives branch migration. In the full resolvosome a probable DNA-RuvA(4)-RuvB(12)-RuvC(2) complex forms which resolves the HJ.

The protein localises to the cytoplasm. In terms of biological role, the RuvA-RuvB-RuvC complex processes Holliday junction (HJ) DNA during genetic recombination and DNA repair, while the RuvA-RuvB complex plays an important role in the rescue of blocked DNA replication forks via replication fork reversal (RFR). RuvA specifically binds to HJ cruciform DNA, conferring on it an open structure. The RuvB hexamer acts as an ATP-dependent pump, pulling dsDNA into and through the RuvAB complex. HJ branch migration allows RuvC to scan DNA until it finds its consensus sequence, where it cleaves and resolves the cruciform DNA. The polypeptide is Holliday junction branch migration complex subunit RuvA (Bacillus cytotoxicus (strain DSM 22905 / CIP 110041 / 391-98 / NVH 391-98)).